A 230-amino-acid polypeptide reads, in one-letter code: Uracil-DNA glycosylase (230 aa).

Asp-71 (proton acceptor) is an active-site residue.

It belongs to the uracil-DNA glycosylase (UDG) superfamily. UNG family.

It is found in the cytoplasm. The catalysed reaction is Hydrolyzes single-stranded DNA or mismatched double-stranded DNA and polynucleotides, releasing free uracil.. Excises uracil residues from the DNA which can arise as a result of misincorporation of dUMP residues by DNA polymerase or due to deamination of cytosine. The polypeptide is Uracil-DNA glycosylase (Nocardioides sp. (strain ATCC BAA-499 / JS614)).